We begin with the raw amino-acid sequence, 415 residues long: Homoserine O-acetyltransferase (415 aa).

One can recognise an AB hydrolase-1 domain in the interval 47–369; it reads NAVLVCHGLT…HGHDAFLVEP (323 aa). Ser-155 (nucleophile) is an active-site residue. Arg-226 lines the substrate pocket. Catalysis depends on residues Asp-329 and His-362. Asp-363 contacts substrate. The interval 383–415 is disordered; sequence GVAGRAVTDTAPDGGEPDEDEDFAPVHSSLFSR.

Belongs to the AB hydrolase superfamily. MetX family. In terms of assembly, homodimer.

It is found in the cytoplasm. It carries out the reaction L-homoserine + acetyl-CoA = O-acetyl-L-homoserine + CoA. It functions in the pathway amino-acid biosynthesis; L-methionine biosynthesis via de novo pathway; O-acetyl-L-homoserine from L-homoserine: step 1/1. Functionally, transfers an acetyl group from acetyl-CoA to L-homoserine, forming acetyl-L-homoserine. In Haloferax volcanii (strain ATCC 29605 / DSM 3757 / JCM 8879 / NBRC 14742 / NCIMB 2012 / VKM B-1768 / DS2) (Halobacterium volcanii), this protein is Homoserine O-acetyltransferase.